A 749-amino-acid polypeptide reads, in one-letter code: Poly(U)-binding-splicing factor rnp-6 (749 aa).

2 RRM domains span residues 102-176 (SRIY…LKVN) and 207-285 (FRVY…KCVT). 2 disordered regions span residues 323–388 (AGSS…PDVV) and 457–480 (IEEEEEARTERVKLSTSQRKKMKR). The span at 330–354 (PSESGGSRAASPAPRAQSPATPSSS) shows a compositional bias: low complexity. Residues 658-739 (NVIVLRNMVT…NTVKAEAYDQ (82 aa)) enclose the RRM 3; atypical domain.

The protein belongs to the RRM half pint family.

The protein localises to the nucleus. DNA- and RNA-binding protein, involved in several nuclear processes such as pre-mRNA splicing, apoptosis and transcription regulation. Ensures the correct splicing of genes involved in immunity to promote longevity in response to infection by pathogenic bacteria such as S.aureus. The protein is Poly(U)-binding-splicing factor rnp-6 of Caenorhabditis elegans.